The primary structure comprises 109 residues: Iron-sulfur cluster assembly protein CyaY (109 aa).

Belongs to the frataxin family.

Involved in iron-sulfur (Fe-S) cluster assembly. May act as a regulator of Fe-S biogenesis. The chain is Iron-sulfur cluster assembly protein CyaY from Bordetella petrii (strain ATCC BAA-461 / DSM 12804 / CCUG 43448).